Here is an 80-residue protein sequence, read N- to C-terminus: Acyl carrier protein (80 aa).

The region spanning 2–77 is the Carrier domain; the sequence is SDIEQRVKKI…QAIDYAKAHV (76 aa). Serine 37 is subject to O-(pantetheine 4'-phosphoryl)serine.

This sequence belongs to the acyl carrier protein (ACP) family. In terms of processing, 4'-phosphopantetheine is transferred from CoA to a specific serine of apo-ACP by AcpS. This modification is essential for activity because fatty acids are bound in thioester linkage to the sulfhydryl of the prosthetic group.

It localises to the cytoplasm. The protein operates within lipid metabolism; fatty acid biosynthesis. Its function is as follows. Carrier of the growing fatty acid chain in fatty acid biosynthesis. The polypeptide is Acyl carrier protein (Herminiimonas arsenicoxydans).